A 134-amino-acid chain; its full sequence is UPF0102 protein Adeh_1910 (134 aa).

This sequence belongs to the UPF0102 family.

The sequence is that of UPF0102 protein Adeh_1910 from Anaeromyxobacter dehalogenans (strain 2CP-C).